Reading from the N-terminus, the 288-residue chain is Ice-binding protein (288 aa).

The signal sequence occupies residues 1–22 (MFSTTLINTFSLGLLAVVSVVA). Short sequence motifs (ice-binding site motif (T-A/G-X-T/N)) lie at residues 75 to 78 (TAGN) and 154 to 157 (TAFN). Asn-194 is a glycosylation site (N-linked (GlcNAc...) asparagine). 2 short sequence motifs (ice-binding site motif (T-A/G-X-T/N)) span residues 196–199 (TGVT) and 265–268 (TGAT).

This sequence belongs to the ice-binding protein family.

Its subcellular location is the secreted. Its function is as follows. Binds ice crystals and most probably inhibits their growth in order to prevent cell damage from extracellular ice. The protein is Ice-binding protein of Lentinula edodes (Shiitake mushroom).